A 500-amino-acid polypeptide reads, in one-letter code: 7-alpha-hydroxycholest-4-en-3-one 12-alpha-hydroxylase (500 aa).

The chain crosses the membrane as a helical span at residues 4–24 (WCTVLGALLTVVGCLCLSLLL). The residue at position 325 (Ser325) is a Phosphoserine. Position 439 (Cys439) interacts with heme.

This sequence belongs to the cytochrome P450 family. Heme serves as cofactor. Expressed in liver.

The protein resides in the endoplasmic reticulum membrane. Its subcellular location is the microsome membrane. The enzyme catalyses 7alpha-hydroxycholest-4-en-3-one + reduced [NADPH--hemoprotein reductase] + O2 = 7alpha,12alpha-dihydroxycholest-4-en-3-one + oxidized [NADPH--hemoprotein reductase] + H2O + H(+). The catalysed reaction is 5beta-cholestane-3alpha,7alpha-diol + reduced [NADPH--hemoprotein reductase] + O2 = 5beta-cholestane-3alpha,7alpha,12alpha-triol + oxidized [NADPH--hemoprotein reductase] + H2O + H(+). It carries out the reaction chenodeoxycholate + reduced [NADPH--hemoprotein reductase] + O2 = cholate + oxidized [NADPH--hemoprotein reductase] + H2O + H(+). The protein operates within lipid metabolism; bile acid biosynthesis. A cytochrome P450 monooxygenase involved in primary bile acid biosynthesis. Catalyzes the 12alpha-hydroxylation of 7alpha-hydroxy-4-cholesten-3-one, an intermediate metabolite in cholic acid biosynthesis. Controls biliary balance of cholic acid and chenodeoxycholic acid, ultimately regulating the intestinal absorption of dietary lipids. Mechanistically, uses molecular oxygen inserting one oxygen atom into a substrate, and reducing the second into a water molecule, with two electrons provided by NADPH via cytochrome P450 reductase (CPR; NADPH--hemoprotein reductase). This Mus musculus (Mouse) protein is 7-alpha-hydroxycholest-4-en-3-one 12-alpha-hydroxylase (Cyp8b1).